Consider the following 406-residue polypeptide: Argininosuccinate synthase (406 aa).

ATP is bound by residues 12-20 (AYSGGLDTS) and Ala40. L-citrulline-binding residues include Tyr92 and Ser97. Position 122 (Gly122) interacts with ATP. L-aspartate contacts are provided by Thr124, Asn128, and Asp129. L-citrulline is bound at residue Asn128. Residues Arg132, Ser181, Ser190, Glu266, and Tyr278 each coordinate L-citrulline.

Belongs to the argininosuccinate synthase family. Type 1 subfamily. Homotetramer.

It is found in the cytoplasm. It catalyses the reaction L-citrulline + L-aspartate + ATP = 2-(N(omega)-L-arginino)succinate + AMP + diphosphate + H(+). The protein operates within amino-acid biosynthesis; L-arginine biosynthesis; L-arginine from L-ornithine and carbamoyl phosphate: step 2/3. The polypeptide is Argininosuccinate synthase (Serratia proteamaculans (strain 568)).